The following is a 258-amino-acid chain: Snake venom serine protease PTLE1 (258 aa).

The first 18 residues, 1–18 (MVLIRVLANLLILQLSYA), serve as a signal peptide directing secretion. The propeptide occupies 19-24 (QKSSEL). The 225-residue stretch at 25 to 249 (VIGGDECNIN…YTDWIENIIA (225 aa)) folds into the Peptidase S1 domain. 6 cysteine pairs are disulfide-bonded: Cys31–Cys163, Cys50–Cys66, Cys98–Cys256, Cys142–Cys210, Cys174–Cys189, and Cys200–Cys225. An N-linked (GlcNAc...) asparagine glycan is attached at Asn44. Catalysis depends on His65, which acts as the Charge relay system. 2 N-linked (GlcNAc...) asparagine glycosylation sites follow: Asn79 and Asn103. The active-site Charge relay system is Asp110. N-linked (GlcNAc...) asparagine glycosylation occurs at Asn121. The active-site Charge relay system is Ser204.

Belongs to the peptidase S1 family. Snake venom subfamily. As to quaternary structure, monomer. In terms of tissue distribution, expressed by the venom gland.

It is found in the secreted. Functionally, snake venom serine protease that may act in the hemostasis system of the prey. This is Snake venom serine protease PTLE1 from Gloydius halys (Chinese water mocassin).